A 253-amino-acid polypeptide reads, in one-letter code: 3-dehydroquinate dehydratase (253 aa).

3-dehydroquinate-binding positions include 46-48 (EFR) and Arg82. The active-site Proton donor/acceptor is His143. Lys170 functions as the Schiff-base intermediate with substrate in the catalytic mechanism. 3-dehydroquinate-binding residues include Arg213, Ser232, and Gln236.

Belongs to the type-I 3-dehydroquinase family. In terms of assembly, homodimer.

It catalyses the reaction 3-dehydroquinate = 3-dehydroshikimate + H2O. The protein operates within metabolic intermediate biosynthesis; chorismate biosynthesis; chorismate from D-erythrose 4-phosphate and phosphoenolpyruvate: step 3/7. Involved in the third step of the chorismate pathway, which leads to the biosynthesis of aromatic amino acids. Catalyzes the cis-dehydration of 3-dehydroquinate (DHQ) and introduces the first double bond of the aromatic ring to yield 3-dehydroshikimate. This Clostridium novyi (strain NT) protein is 3-dehydroquinate dehydratase.